The sequence spans 752 residues: MAP/microtubule affinity-regulating kinase 4 (752 aa).

Residues 1 to 36 are disordered; that stretch reads MSSRTVLAPGNDRNSDTHGTLGSGRSSDKGPSWSSR. In terms of domain architecture, Protein kinase spans 59 to 310; the sequence is YRLLRTIGKG…LEQIMKDKWI (252 aa). ATP is bound by residues 65–73 and Lys-88; that span reads IGKGNFAKV. Asp-181 functions as the Proton acceptor in the catalytic mechanism. At Thr-214 the chain carries Phosphothreonine; by LKB1. One can recognise a UBA domain in the interval 324–368; that stretch reads EPEEDFGDTKRIEVMVGMGYTREEIKESLTSQKYNEVTATYLLLG. A disordered region spans residues 385–614; that stretch reads ARVRAPSDTT…PAGRPRPTTN (230 aa). The segment covering 391-406 has biased composition (low complexity); the sequence is SDTTNGTSSSKGTSHS. 2 positions are modified to phosphoserine: Ser-423 and Ser-543. The segment covering 544–553 has biased composition (low complexity); sequence PSSHSLAPPS. The 50-residue stretch at 703–752 folds into the KA1 domain; sequence AGGPEPLSHFEVEVCQLPRPGLRGVLFRRVAGTALAFRTLVTRISNDLEL.

Belongs to the protein kinase superfamily. CAMK Ser/Thr protein kinase family. SNF1 subfamily. As to quaternary structure, interacts with MAPT/TAU. Interacts with gamma-tubulin. Interacts with ODF2. Interacts with USP9X. Interacts with YWHAQ. Interacts with NLRP3; promoting NLRP3 recruitment to microtubule organizing center (MTOC). Requires Mg(2+) as cofactor. In terms of processing, ubiquitinated with 'Lys-29'- and 'Lys-33'-linked polyubiquitins which appear to impede LKB1-mediated phosphorylation. Deubiquitinated by USP9X. Post-translationally, phosphorylated at Thr-214 by STK11/LKB1 in complex with STE20-related adapter-alpha (STRADA) pseudo kinase and CAB39. Phosphorylated throughout the cell cycle. In terms of tissue distribution, ubiquitous. Isoform 2 is brain-specific. Expressed at highest levels in brain and testis. Also expressed in heart, lung, liver, muscle, kidney and spleen.

Its subcellular location is the cytoplasm. It localises to the cytoskeleton. The protein resides in the microtubule organizing center. It is found in the centrosome. The protein localises to the cilium basal body. Its subcellular location is the cilium axoneme. It localises to the cell projection. The protein resides in the dendrite. It carries out the reaction L-seryl-[protein] + ATP = O-phospho-L-seryl-[protein] + ADP + H(+). It catalyses the reaction L-threonyl-[protein] + ATP = O-phospho-L-threonyl-[protein] + ADP + H(+). Activated by phosphorylation on Thr-214. Functionally, serine/threonine-protein kinase. Phosphorylates the microtubule-associated protein MAPT/TAU. Also phosphorylates the microtubule-associated proteins MAP2 and MAP4. Involved in regulation of the microtubule network, causing reorganization of microtubules into bundles. Required for the initiation of axoneme extension during cilium assembly. Regulates the centrosomal location of ODF2 and phosphorylates ODF2 in vitro. Plays a role in cell cycle progression, specifically in the G1/S checkpoint. Reduces neuronal cell survival. Plays a role in energy homeostasis by regulating satiety and metabolic rate. Promotes adipogenesis by activating JNK1 and inhibiting the p38MAPK pathway, and triggers apoptosis by activating the JNK1 pathway. Phosphorylates mTORC1 complex member RPTOR and acts as a negative regulator of the mTORC1 complex, probably due to disruption of the interaction between phosphorylated RPTOR and the RRAGA/RRAGC heterodimer which is required for mTORC1 activation. Involved in NLRP3 positioning along microtubules by mediating NLRP3 recruitment to microtubule organizing center (MTOC) upon inflammasome activation. The polypeptide is MAP/microtubule affinity-regulating kinase 4 (Homo sapiens (Human)).